The sequence spans 153 residues: Ribonuclease K3 (153 aa).

An N-terminal signal peptide occupies residues 1–26 (MGPDLRCFPLLLLLLGLWWSVRPLCA). N-linked (GlcNAc...) asparagine glycosylation occurs at asparagine 30. Residue histidine 41 is the Proton acceptor of the active site. 4 disulfide bridges follow: cysteine 49-cysteine 107, cysteine 63-cysteine 117, cysteine 81-cysteine 132, and cysteine 88-cysteine 95. Asparagine 58 carries N-linked (GlcNAc...) asparagine glycosylation. Position 64–68 (64–68 (KPQNT)) interacts with substrate. N-linked (GlcNAc...) asparagine glycosylation is present at asparagine 85. Lysine 89 contacts substrate. The active-site Proton donor is the histidine 148.

It belongs to the pancreatic ribonuclease family. In terms of assembly, interacts (via N-terminus) with bacterial lipopolysaccharide (LPS). In terms of tissue distribution, kidney.

The protein localises to the secreted. The protein resides in the lysosome. It localises to the cytoplasmic granule. Its function is as follows. Ribonuclease which shows a preference for the pyrimidines uridine and cytosine. Has potent antibacterial activity against a range of Gram-positive and Gram-negative bacteria, including P.aeruginosa, A.baumanii, M.luteus, S.aureus, E.faecalis, E.faecium, S.saprophyticus and E.coli. Causes loss of bacterial membrane integrity, and also promotes agglutination of Gram-negative bacteria. Probably contributes to urinary tract sterility. Bactericidal activity is independent of RNase activity. In Sus scrofa (Pig), this protein is Ribonuclease K3 (RNASE6).